The following is a 225-amino-acid chain: MRRGRAAAAPAPVTGEPNGSGGSKEIRFRGVRKRPWGRFAAEIRDPWKKTRVWLGTFDSAEDAARAYDAAARALRGPKAKTNFPLPYAHHHQFNQGHNPNNDPFVDSRFYPQDNPIISQRPTSSSMSSTVESFSGPRPPPAPRQQTTASSRKYTRSPPVVPDDCHSDCDSSSSVVDHGDCEKENDNDNDNIASSSFRKPLLFDLNLPPPMDDAGADDLHCTALCL.

Low complexity predominate over residues 1 to 12; the sequence is MRRGRAAAAPAP. Disordered regions lie at residues 1–29 and 82–193; these read MRRG…IRFR and NFPL…NIAS. The segment at residues 27-84 is a DNA-binding region (AP2/ERF); the sequence is RFRGVRKRPWGRFAAEIRDPWKKTRVWLGTFDSAEDAARAYDAAARALRGPKAKTNFP. A compositionally biased stretch (low complexity) spans 118 to 134; sequence SQRPTSSSMSSTVESFS. Positions 176–185 are enriched in basic and acidic residues; sequence DHGDCEKEND. The short motif at 202 to 208 is the EAR-like (transcriptional repression) element; that stretch reads FDLNLPP.

The protein belongs to the ethylene-response factor family. Class 2 subfamily.

The protein resides in the nucleus. In terms of biological role, transcription factor that binds to the GCC-box pathogenesis-related promoter element. Involved in the regulation of gene expression by stress factors and by components of stress signal transduction pathways. Probably acts as a transcriptional repressor and may regulate other AtERFs. The protein is Ethylene-responsive transcription factor 3 (ERF3) of Nicotiana tabacum (Common tobacco).